We begin with the raw amino-acid sequence, 49 residues long: uncharacterized protein (49 aa).

The first 22 residues, 1–22 (MKLNAFHLVVVVLIVSIFSVSS), serve as a signal peptide directing secretion.

Its subcellular location is the secreted. This is an uncharacterized protein from Dictyostelium discoideum (Social amoeba).